We begin with the raw amino-acid sequence, 538 residues long: Guanine nucleotide-binding protein-like 3 (538 aa).

A compositionally biased stretch (basic residues) spans 1–45 (MKRPKLKKASKRMTCHKRYKIQKKVREHHRKLRKEAKKRGHKKPK). A disordered region spans residues 1–125 (MKRPKLKKAS…KAKSGKQNPK (125 aa)). The interval 2-46 (KRPKLKKASKRMTCHKRYKIQKKVREHHRKLRKEAKKRGHKKPKK) is basic. The stretch at 54-95 (APFKEALLREAELRKQQLEELKQQQKLDRQKEQERKRKLEIS) forms a coiled coil. Positions 59–94 (ALLREAELRKQQLEELKQQQKLDRQKEQERKRKLEI) are enriched in basic and acidic residues. Position 79 is an N6-acetyllysine (lysine 79). Lysine 91 participates in a covalent cross-link: Glycyl lysine isopeptide (Lys-Gly) (interchain with G-Cter in SUMO2). 2 positions are modified to phosphoserine: serine 95 and serine 101. Residues 95-110 (SPDDEQSNVETQEESD) show a composition bias toward acidic residues. Basic residues predominate over residues 115–125 (KKAKSGKQNPK). The region spanning 129 to 307 (CQELKKVIEA…IIDSPCFIIS (179 aa)) is the CP-type G domain. Position 176-179 (176-179 (NKSD)) interacts with GTP. Glycyl lysine isopeptide (Lys-Gly) (interchain with G-Cter in SUMO2) cross-links involve residues lysine 177, lysine 248, lysine 262, and lysine 270. 256 to 263 (GFPNVGKS) serves as a coordination point for GTP. Residues 277–451 (VGVSMGLTRS…HLTNKILFRS (175 aa)) are intermediate. A GTP-binding site is contributed by 300–303 (DSPC). Composition is skewed to basic and acidic residues over residues 460–473 (EEKD…KQTE) and 481–491 (QEHVTGEKNAE). The acidic stretch occupies residues 460–532 (EEKDIPEESP…KMSEEDDAYD (73 aa)). Residues 460-538 (EEKDIPEESP…DAYDFTTDYI (79 aa)) form a disordered region. Residues serine 493, serine 505, and serine 518 each carry the phosphoserine modification. Basic and acidic residues predominate over residues 514-524 (PSDRSFILDKM).

It belongs to the TRAFAC class YlqF/YawG GTPase family. As to quaternary structure, interacts with MDM2; this interaction stabilizes MDM2. Interaction with MDM2 occurs in the nucleoplasm and is triggered by a nucleolar release mechanism, such as mitosis-induced nucleolar disassembly. May interact with p53/TP53 via its basic domain. This interaction is most probably indirect and mediated by MDM2-binding. Expressed in testis.

The protein localises to the nucleus. Its subcellular location is the nucleolus. May be required to maintain the proliferative capacity of stem cells. Stabilizes MDM2 by preventing its ubiquitination, and hence proteasomal degradation. This chain is Guanine nucleotide-binding protein-like 3 (Gnl3), found in Rattus norvegicus (Rat).